A 700-amino-acid polypeptide reads, in one-letter code: Glutamine synthetase (700 aa).

One can recognise a GS beta-grasp domain in the interval 65–155 (YHFTPPGSSP…LPTAFCSYGG (91 aa)). The region spanning 159-589 (DRDSLLRSME…TMQEMIRKDL (431 aa)) is the GS catalytic domain. Mg(2+)-binding residues include Glu196, Glu198, Glu267, and Glu274. Residues 318–319 (NG) and Gly319 each bind L-glutamate. His323 is a binding site for Mg(2+). Positions 327 and 435 each coordinate ATP. Residue Arg435 coordinates L-glutamate. Position 472 (Glu472) interacts with Mg(2+).

Belongs to the glutamine synthetase family. As to quaternary structure, homohexamer. Requires Mg(2+) as cofactor.

Its subcellular location is the cytoplasm. It catalyses the reaction L-glutamate + NH4(+) + ATP = L-glutamine + ADP + phosphate + H(+). Its activity is regulated as follows. The activity of this enzyme is not controlled by adenylation. In terms of biological role, catalyzes the ATP-dependent biosynthesis of glutamine from glutamate and ammonia. In Butyrivibrio fibrisolvens, this protein is Glutamine synthetase.